A 1904-amino-acid polypeptide reads, in one-letter code: Voltage-dependent calcium channel type A subunit alpha-1 (1904 aa).

The disordered stretch occupies residues 1 to 45 (MLGGVGGRHMSTRRRGSSPLVRGGAGLTGYAGPGASGNSNDVAAI). A compositionally biased stretch (gly residues) spans 23-35 (GGAGLTGYAGPGA). The Cytoplasmic portion of the chain corresponds to 30–168 (YAGPGASGNS…KHTRFIIEWP (139 aa)). Residues 155–447 (NCIRKHTRFI…LVLGVLSGEF (293 aa)) form an I repeat. A helical membrane pass occupies residues 169–187 (PFEYAVLLTIIANCVVLAL). At 188-205 (EEHLPKQDKTILAQKLEA) the chain is on the extracellular side. The helical transmembrane segment at 206–225 (TEIYFLGIFCVEASLKILAL) threads the bilayer. Over 226 to 237 (GFVLHRGSYLRN) the chain is Cytoplasmic. A helical membrane pass occupies residues 238–259 (IWNIMDFFVVVTGFITAFSQGI). At 260 to 264 (ELDMD) the chain is on the extracellular side. Residues 265–283 (LRTLRAIRVLRPLKLVSGI) form a helical membrane-spanning segment. At 284–302 (PSLQVVLKSIIKAMAPLLQ) the chain is on the cytoplasmic side. The chain crosses the membrane as a helical span at residues 303 to 322 (IGLLVLFAIVIFAIIGLEFY). Over 323-419 (SGTLHKTCYS…WTNDALGSTY (97 aa)) the chain is Extracellular. N-linked (GlcNAc...) asparagine glycosylation is found at Asn-353 and Asn-367. The helical transmembrane segment at 420–444 (NWIYFIPLIVLGSFFMLNLVLGVLS) threads the bilayer. Over 445 to 568 (GEFAKEREKV…YWIRKSVKSQ (124 aa)) the chain is Cytoplasmic. The disordered stretch occupies residues 513-543 (KKLGKSKSTDTEEEEGDDDQDDGELSSSTKE). Residues 523 to 536 (TEEEEGDDDQDDGE) show a composition bias toward acidic residues. Residues 554 to 797 (EKRFRYWIRK…VFLAIAVDNL (244 aa)) form an II repeat. The chain crosses the membrane as a helical span at residues 569 to 587 (KFYWFVIVLVFFNTVCVAV). The Extracellular segment spans residues 588–602 (EHYGQPQWLTDFLYF). A helical transmembrane segment spans residues 603–622 (AEFVFLALFMLEMFIKVYAL). The Cytoplasmic segment spans residues 623-630 (GPRTYFDS). Residues 631–649 (SFNRFDCVVISGSIFEVIW) form a helical membrane-spanning segment. Over 650–658 (SEVKSGSFG) the chain is Extracellular. The chain crosses the membrane as a helical span at residues 659 to 677 (LSVLRALRLLRIFKVTKYW). The Cytoplasmic portion of the chain corresponds to 678–696 (KSLRNLVISLLSSMRSIIS). The chain crosses the membrane as a helical span at residues 697 to 716 (LLFLLFLFILIFALLGMQLF). At 717 to 769 (GGQFNFDSGTPPTNFNTFPIALLTVFQILTGEDWNEVMYQGIESQGGHKKGMI) the chain is on the extracellular side. The helical transmembrane segment at 770 to 794 (YSLYFIVLVLFGNYTLLNVFLAIAV) threads the bilayer. Residues 795–895 (DNLANAQELS…VRRAAHWVVN (101 aa)) lie on the Cytoplasmic side of the membrane. A disordered region spans residues 827-869 (QSLQNPKDGGAPKVEICPPNGKGGKQSSEEEKKQDEDDDTGPK). An III repeat occupies 890–1177 (AHWVVNLRYF…IITFQEQGEA (288 aa)). Residues 896-914 (LRYFDFFIMVVISLSSIAL) form a helical membrane-spanning segment. The Extracellular portion of the chain corresponds to 915–930 (AAEDPVWEDSPRNEVL). The chain crosses the membrane as a helical span at residues 931-950 (NYFDYAFTGVFTVEMILKII). The Cytoplasmic segment spans residues 951–962 (DLGIILHPGSYL). A helical membrane pass occupies residues 963–981 (REFWNIMDAVVVICAAVSF). Residues 982-994 (AFDMTGSSAGQNL) lie on the Extracellular side of the membrane. The N-linked (GlcNAc...) asparagine glycan is linked to Asn-993. Residues 995 to 1013 (STIKSLRVLRVLRPLKTIK) traverse the membrane as a helical segment. At 1014–1032 (RVPKLKAVFDCVVNSLKNV) the chain is on the cytoplasmic side. A helical transmembrane segment spans residues 1033–1052 (INILIVYILFQFIFAVIAVQ). The Extracellular portion of the chain corresponds to 1053-1141 (LFNGKFFYCS…EDKGPIQNFR (89 aa)). Residues 1142–1166 (IEMSIFYIVYFIVFPFFFVNIFVAL) form a helical membrane-spanning segment. At 1167 to 1221 (IIITFQEQGEAELQDGEIDKNQKSCIDFTIQARPLERYMPKERNSVKYKIWRIVV) the chain is on the cytoplasmic side. Residues 1214–1470 (YKIWRIVVST…DNFDYLTRDS (257 aa)) form an IV repeat. Residues 1222–1250 (STPFEYFIMGLIVLNTVLLMMKFHRQSDA) form a helical membrane-spanning segment. Residues 1251–1255 (YKNTL) lie on the Extracellular side of the membrane. A helical membrane pass occupies residues 1256–1275 (KYMNMCFTGMFTVECILKIA). The Cytoplasmic segment spans residues 1276–1283 (AFGVRNFF). A helical transmembrane segment spans residues 1284-1302 (KDAWNTFDFITVIGSIVDA). Residues 1303 to 1309 (LVIEFGE) lie on the Extracellular side of the membrane. The helical transmembrane segment at 1310–1328 (NFINVGFLRLFRAARLIKL) threads the bilayer. The Cytoplasmic portion of the chain corresponds to 1329–1347 (LRQGYTIRILLWTFVQSFK). Residues 1348–1367 (ALPYVCLLIAMLFFIYAIIG) form a helical membrane-spanning segment. Residues 1368-1431 (MQVFGNIALD…AKAGKQEGGC (64 aa)) lie on the Extracellular side of the membrane. The segment at 1430–1471 (GCGSNIAYAYFVSFIFFCSFLMLNLFVAVIMDNFDYLTRDSS) is phenylalkylamine binding. Residues 1432 to 1456 (GSNIAYAYFVSFIFFCSFLMLNLFV) traverse the membrane as a helical segment. At 1457–1904 (AVIMDNFDYL…HSDSDEDDWC (448 aa)) the chain is on the cytoplasmic side. Residues 1476-1511 (HHLDEFVRIWAEYDPNATGKIHYTEMYDMLKNMDPP) enclose the EF-hand domain. The Ca(2+) site is built by Asp-1489, Asn-1491, Thr-1493, Lys-1495, and Glu-1500. Disordered regions lie at residues 1652–1694 (THTG…HEGP), 1710–1788 (THHP…HSYP), and 1870–1904 (GGRL…DDWC). Positions 1670-1681 (RSPSLRHSPGRP) are enriched in low complexity. Residues 1682 to 1691 (GYDHHGHYYH) are compositionally biased toward basic and acidic residues. Positions 1710–1725 (THHPHPSQYNHRHRMR) are enriched in basic residues. A compositionally biased stretch (low complexity) spans 1727–1740 (PWSASTSPARTPSP). A compositionally biased stretch (polar residues) spans 1751–1762 (GTTSLEQRSRSP). Residues 1771–1784 (PHTHQHYHRHHPHQ) are compositionally biased toward basic residues.

It belongs to the calcium channel alpha-1 subunit (TC 1.A.1.11) family. CACNA1I subfamily. As to quaternary structure, interacts with CATSPER1 and CATSPER2, leading to suppress T-type calcium channel activity.

Its subcellular location is the membrane. In terms of biological role, voltage-sensitive calcium channels (VSCC) mediate the entry of calcium ions into excitable cells and are also involved in a variety of calcium-dependent processes, including muscle contraction, neurotransmitter release, gene expression, cell motility, cell division and cell death. The chain is Voltage-dependent calcium channel type A subunit alpha-1 (CAC) from Apis mellifera (Honeybee).